Consider the following 154-residue polypeptide: Putative esterase AF_2264 (154 aa).

Belongs to the thioesterase PaaI family.

The polypeptide is Putative esterase AF_2264 (Archaeoglobus fulgidus (strain ATCC 49558 / DSM 4304 / JCM 9628 / NBRC 100126 / VC-16)).